The sequence spans 416 residues: ATP-dependent Clp protease ATP-binding subunit ClpX (416 aa).

Residues 1-54 (MFKFGDEKGQLKCSFCGKSQEQVRKLVAGPGVYICDECIELCNEIIEEELNDDV) form the ClpX-type ZB domain. 4 residues coordinate Zn(2+): C13, C16, C35, and C38. An ATP-binding site is contributed by 117–124 (PTGCGKTL).

The protein belongs to the ClpX chaperone family. As to quaternary structure, component of the ClpX-ClpP complex. Forms a hexameric ring that, in the presence of ATP, binds to fourteen ClpP subunits assembled into a disk-like structure with a central cavity, resembling the structure of eukaryotic proteasomes.

In terms of biological role, ATP-dependent specificity component of the Clp protease. It directs the protease to specific substrates. Can perform chaperone functions in the absence of ClpP. The sequence is that of ATP-dependent Clp protease ATP-binding subunit ClpX from Halothermothrix orenii (strain H 168 / OCM 544 / DSM 9562).